The following is an 84-amino-acid chain: Subtilisin-chymotrypsin inhibitor WSCI (84 aa).

A signal peptide spans 1 to 12 (MSSVVKKPLGGN). Residues 1-28 (MSSVVKKPLGGNTDTGDHHNQKTEWPEL) form a disordered region. The segment covering 15-25 (TGDHHNQKTEW) has biased composition (basic and acidic residues).

In terms of assembly, monomer.

Its subcellular location is the secreted. Its function is as follows. Inhibits B.lichenoformis subtilisin, B.subtilis subtilisin, bovine pancreatic alpha-chymotrypsin and porcine alpha-chymotrypsin with Ki of 3.92 nM, 5.70 nM, 7.24 nM and 9.35 nM respectively. B.lichenoformis subtilisin is inhibited with a molar ratio of 1:0.87. Also inhibits chymotrypsin-like activities from the digestive tracts of the insect larvae T.molitor, P.interpunctella and H.armigera. Does not inhibit bovine pancreatic trypsin, porcine pancreatic elastase, or human leukocyte elastase. This chain is Subtilisin-chymotrypsin inhibitor WSCI, found in Triticum aestivum (Wheat).